The following is a 26-amino-acid chain: Aralin B chain (26 aa).

As to quaternary structure, disulfide-linked dimer of A and B chains. Glycosylated. High-mannose type oligosaccharides.

Its function is as follows. Lectin specific for galactose (Gal) and its derivatives. Induces apoptosis. Has cytotoxic activity against several human cancer cell lines. Is less cytotoxic to normal human cells. This chain is Aralin B chain, found in Aralia elata (Japanese angelica tree).